A 242-amino-acid chain; its full sequence is Biosynthetic peptidoglycan transglycosylase (242 aa).

The chain crosses the membrane as a helical span at residues 19–39; that stretch reads LMVVLAIFWGGGIALFSVAPV.

This sequence belongs to the glycosyltransferase 51 family.

Its subcellular location is the cell inner membrane. The catalysed reaction is [GlcNAc-(1-&gt;4)-Mur2Ac(oyl-L-Ala-gamma-D-Glu-L-Lys-D-Ala-D-Ala)](n)-di-trans,octa-cis-undecaprenyl diphosphate + beta-D-GlcNAc-(1-&gt;4)-Mur2Ac(oyl-L-Ala-gamma-D-Glu-L-Lys-D-Ala-D-Ala)-di-trans,octa-cis-undecaprenyl diphosphate = [GlcNAc-(1-&gt;4)-Mur2Ac(oyl-L-Ala-gamma-D-Glu-L-Lys-D-Ala-D-Ala)](n+1)-di-trans,octa-cis-undecaprenyl diphosphate + di-trans,octa-cis-undecaprenyl diphosphate + H(+). It functions in the pathway cell wall biogenesis; peptidoglycan biosynthesis. Peptidoglycan polymerase that catalyzes glycan chain elongation from lipid-linked precursors. This chain is Biosynthetic peptidoglycan transglycosylase, found in Escherichia coli O45:K1 (strain S88 / ExPEC).